A 223-amino-acid polypeptide reads, in one-letter code: MATSMIQRMFKQGTKIVCVGRNYAAHAKELGNAVPKEPVIFLKPTSSYLENGGTIEIPHPLDSLHHEVELALVIGQKARDVPESIAMDYIGGYAVALDMTARELQASAKASGLPWTVAKGQDTFTPISSVLPKAMVRDPDNLELWLKVDGETRQKGLTKDMIFKVPYLISYISSIMTLYEGDVILTGTPEGVGPVKIGQKITAGITGLSEVQFDVERRVKPLS.

A mitochondrion-targeting transit peptide spans 1–30; sequence MATSMIQRMFKQGTKIVCVGRNYAAHAKEL. Positions 67, 69, and 98 each coordinate Mg(2+).

The protein belongs to the FAH family. It depends on Mg(2+) as a cofactor. The cofactor is Mn(2+).

It is found in the mitochondrion. It carries out the reaction oxaloacetate = enol-oxaloacetate. Its function is as follows. Tautomerase that converts enol-oxaloacetate, a strong inhibitor of succinate dehydrogenase, to the physiological keto form of oxaloacetate. The sequence is that of Oxaloacetate tautomerase FAHD1, mitochondrial from Arabidopsis thaliana (Mouse-ear cress).